The sequence spans 176 residues: Tubulin polymerization-promoting protein family member 3 (176 aa).

N-acetylalanine is present on Ala-2. A disordered region spans residues 132 to 152 (TGSHKERFDESGKGKGIAGRQ). The segment covering 134–144 (SHKERFDESGK) has biased composition (basic and acidic residues).

It belongs to the TPPP family. As to expression, expressed in endometrium during the mid-secretory phase (LH + 7) (at protein level).

The protein localises to the cytoplasm. Its subcellular location is the cytoskeleton. In terms of biological role, regulator of microtubule dynamic that has microtubule bundling activity. Required for embryo implantation; possibly by regulating beta-catenin. Also required for decidualization via regulation of beta-catenin. The protein is Tubulin polymerization-promoting protein family member 3 of Homo sapiens (Human).